Here is a 326-residue protein sequence, read N- to C-terminus: Adenosine receptor A1 (326 aa).

Topologically, residues 1-10 (MPPSISAFQA) are extracellular. The chain crosses the membrane as a helical span at residues 11 to 33 (AYIGIEVLIALVSVPGNVLVIWA). At 34–46 (VKVNQALRDATFC) the chain is on the cytoplasmic side. A helical transmembrane segment spans residues 47-69 (FIVSLAVADVAVGALVIPLAILI). Topologically, residues 70–80 (NIGPQTYFHTC) are extracellular. Cys80 and Cys169 are oxidised to a cystine. The helical transmembrane segment at 81–102 (LMVACPVLILTQSSILALLAIA) threads the bilayer. Topologically, residues 103–123 (VDRYLRVKIPLRYKMVVTPRR) are cytoplasmic. A helical membrane pass occupies residues 124–146 (AAVAIAGCWILSFVVGLTPMFGW). Residues 147-176 (NNLSAVERAWAANGSMGEPVIKCEFEKVIS) lie on the Extracellular side of the membrane. An N-linked (GlcNAc...) asparagine glycan is attached at Asn159. The chain crosses the membrane as a helical span at residues 177 to 201 (MEYMVYFNFFVWVLPPLLLMVLIYL). At 202–235 (EVFYLIRKQLNKKVSASSGDPQKYYGKELKIAKS) the chain is on the cytoplasmic side. Residues 236-259 (LALILFLFALSWLPLHILNCITLF) traverse the membrane as a helical segment. Over 260–267 (CPSCHKPS) the chain is Extracellular. Residues 268 to 292 (ILTYIAIFLTHGNSAMNPIVYAFRI) form a helical membrane-spanning segment. Residues 293 to 326 (QKFRVTFLKIWNDHFRCQPAPPIDEDLPEERPDD) are Cytoplasmic-facing. Cys309 carries S-palmitoyl cysteine lipidation.

Belongs to the G-protein coupled receptor 1 family.

The protein localises to the cell membrane. Receptor for adenosine. The activity of this receptor is mediated by G proteins which inhibit adenylyl cyclase. The sequence is that of Adenosine receptor A1 (ADORA1) from Homo sapiens (Human).